Consider the following 467-residue polypeptide: Cysteine--tRNA ligase (467 aa).

C29 serves as a coordination point for Zn(2+). Residues 31 to 41 (PTVYNYVHIGN) carry the 'HIGH' region motif. Residues C209, H234, and E238 each contribute to the Zn(2+) site. Positions 267-271 (KMSKS) match the 'KMSKS' region motif. K270 provides a ligand contact to ATP.

It belongs to the class-I aminoacyl-tRNA synthetase family. As to quaternary structure, monomer. Requires Zn(2+) as cofactor.

Its subcellular location is the cytoplasm. The enzyme catalyses tRNA(Cys) + L-cysteine + ATP = L-cysteinyl-tRNA(Cys) + AMP + diphosphate. In Xylella fastidiosa (strain 9a5c), this protein is Cysteine--tRNA ligase.